Consider the following 570-residue polypeptide: Peptidyl-prolyl cis-trans isomerase FKBP9 (570 aa).

A signal peptide spans methionine 1–alanine 24. PPIase FKBP-type domains lie at glycine 54–tryptophan 142, serine 166–histidine 254, glycine 278–histidine 365, and glycine 389–valine 477. N-linked (GlcNAc...) asparagine glycosylation is found at asparagine 174, asparagine 286, asparagine 302, and asparagine 397. EF-hand domains are found at residues tryptophan 488 to serine 523 and asparagine 533 to aspartate 568. 10 residues coordinate Ca(2+): aspartate 501, aspartate 503, asparagine 505, glutamate 507, glutamate 512, aspartate 546, asparagine 548, aspartate 550, lysine 552, and glutamate 557. Residues histidine 567–leucine 570 carry the Prevents secretion from ER motif.

In terms of processing, phosphorylated.

Its subcellular location is the endoplasmic reticulum lumen. The catalysed reaction is [protein]-peptidylproline (omega=180) = [protein]-peptidylproline (omega=0). Inhibited by FK506. Functionally, PPIases accelerate the folding of proteins during protein synthesis. The sequence is that of Peptidyl-prolyl cis-trans isomerase FKBP9 (Fkbp9) from Rattus norvegicus (Rat).